A 260-amino-acid chain; its full sequence is NAD kinase (260 aa).

Asp49 acts as the Proton acceptor in catalysis. NAD(+) is bound by residues 49–50 (DG), 119–120 (NE), Asp149, Ala157, and 160–165 (TAYNLS).

This sequence belongs to the NAD kinase family. A divalent metal cation serves as cofactor.

It is found in the cytoplasm. The catalysed reaction is NAD(+) + ATP = ADP + NADP(+) + H(+). Involved in the regulation of the intracellular balance of NAD and NADP, and is a key enzyme in the biosynthesis of NADP. Catalyzes specifically the phosphorylation on 2'-hydroxyl of the adenosine moiety of NAD to yield NADP. The protein is NAD kinase of Caulobacter vibrioides (strain ATCC 19089 / CIP 103742 / CB 15) (Caulobacter crescentus).